The following is a 192-amino-acid chain: MDAMEFFRNSSGNWRSQRTTHHLAFRRAETGTSEIFVEALGADDQKIVEICEMHDCDPAKAVGGAFVRWESAMAWDKEDENHEGTTVFALIPDEDNPQQGLLLRERGYAEIVPIAGRYHIDEEEALVLVTEYETMTTIERFWFANPDMRLRTSTVQRFGGFNTATYCTEMRVKEENTVSASPAPAYEQFCGW.

This sequence belongs to the CpcS/CpeS biliprotein lyase family.

In terms of biological role, covalently attaches a chromophore to Cys residue(s) of phycobiliproteins. This is Chromophore lyase CpcS/CpeS 2 from Synechocystis sp. (strain ATCC 27184 / PCC 6803 / Kazusa).